Reading from the N-terminus, the 133-residue chain is Small ribosomal subunit protein uS8 (133 aa).

It belongs to the universal ribosomal protein uS8 family. As to quaternary structure, part of the 30S ribosomal subunit.

Functionally, one of the primary rRNA binding proteins, it binds directly to 16S rRNA central domain where it helps coordinate assembly of the platform of the 30S subunit. This Desulfurococcus amylolyticus (strain DSM 18924 / JCM 16383 / VKM B-2413 / 1221n) (Desulfurococcus kamchatkensis) protein is Small ribosomal subunit protein uS8.